The chain runs to 109 residues: Small ribosomal subunit protein bS6c (109 aa).

The protein belongs to the bacterial ribosomal protein bS6 family.

It localises to the plastid. Its subcellular location is the chloroplast. In terms of biological role, binds together with bS18 to 16S ribosomal RNA. The polypeptide is Small ribosomal subunit protein bS6c (Pyropia yezoensis (Susabi-nori)).